Here is a 488-residue protein sequence, read N- to C-terminus: Proline--tRNA ligase (488 aa).

This sequence belongs to the class-II aminoacyl-tRNA synthetase family. ProS type 3 subfamily. Homodimer.

It is found in the cytoplasm. It carries out the reaction tRNA(Pro) + L-proline + ATP = L-prolyl-tRNA(Pro) + AMP + diphosphate. Functionally, catalyzes the attachment of proline to tRNA(Pro) in a two-step reaction: proline is first activated by ATP to form Pro-AMP and then transferred to the acceptor end of tRNA(Pro). This Pyrobaculum aerophilum (strain ATCC 51768 / DSM 7523 / JCM 9630 / CIP 104966 / NBRC 100827 / IM2) protein is Proline--tRNA ligase.